The chain runs to 326 residues: Biotin synthase (326 aa).

Residues 51 to 275 enclose the Radical SAM core domain; it reads NAVQRSTLLS…MMPTSFVRLS (225 aa). 3 residues coordinate [4Fe-4S] cluster: cysteine 66, cysteine 70, and cysteine 73. [2Fe-2S] cluster is bound by residues cysteine 110, cysteine 141, cysteine 201, and arginine 273.

This sequence belongs to the radical SAM superfamily. Biotin synthase family. As to quaternary structure, homodimer. Requires [4Fe-4S] cluster as cofactor. It depends on [2Fe-2S] cluster as a cofactor.

The catalysed reaction is (4R,5S)-dethiobiotin + (sulfur carrier)-SH + 2 reduced [2Fe-2S]-[ferredoxin] + 2 S-adenosyl-L-methionine = (sulfur carrier)-H + biotin + 2 5'-deoxyadenosine + 2 L-methionine + 2 oxidized [2Fe-2S]-[ferredoxin]. It participates in cofactor biosynthesis; biotin biosynthesis; biotin from 7,8-diaminononanoate: step 2/2. Functionally, catalyzes the conversion of dethiobiotin (DTB) to biotin by the insertion of a sulfur atom into dethiobiotin via a radical-based mechanism. This chain is Biotin synthase, found in Aromatoleum aromaticum (strain DSM 19018 / LMG 30748 / EbN1) (Azoarcus sp. (strain EbN1)).